We begin with the raw amino-acid sequence, 425 residues long: MAGILNVSALEIMDSRGNPTVEVEVILDDGSMGRAAVPSGASTGVHEAHELRDGGDRYLGKGVAKAVDFVNTEIDDALAGLEADDQRLIDQTLLELDGTENKSRLGANALLGVSMAVAHAAADSAGLELFRYVGGPNGHVLPVPMMNILNGGAHADSGVDVQEFMIAPIGAETFAEALQVGAEVYHSLKDVIKAKGLSTGLGDEGGFAPSVESTKAALDLIVEAIEKAGYTLGEDVALALDVASSEFYEDGVYNFEGGKHSSAEMVEVYADLVEQYPIVSIEDPLDEDDWEGYVTLTEKLGDKIQIVGDDLFVTNPSRLQEGIDRGAANALLVKVNQIGTLSETFDAVELAHRNGYRTMMSHRSGETEDTTIADLAVALNCGQIKTGAPARSERVAKYNQLLRIERYLEGAAVYAGRSAFPRFKN.

A (2R)-2-phosphoglycerate-binding site is contributed by glutamine 162. Glutamate 204 serves as the catalytic Proton donor. 3 residues coordinate Mg(2+): aspartate 241, glutamate 282, and aspartate 309. 4 residues coordinate (2R)-2-phosphoglycerate: lysine 334, arginine 363, serine 364, and lysine 385. The Proton acceptor role is filled by lysine 334.

This sequence belongs to the enolase family. Mg(2+) serves as cofactor.

The protein localises to the cytoplasm. It localises to the secreted. Its subcellular location is the cell surface. It carries out the reaction (2R)-2-phosphoglycerate = phosphoenolpyruvate + H2O. It participates in carbohydrate degradation; glycolysis; pyruvate from D-glyceraldehyde 3-phosphate: step 4/5. In terms of biological role, catalyzes the reversible conversion of 2-phosphoglycerate (2-PG) into phosphoenolpyruvate (PEP). It is essential for the degradation of carbohydrates via glycolysis. This chain is Enolase, found in Corynebacterium urealyticum (strain ATCC 43042 / DSM 7109).